We begin with the raw amino-acid sequence, 287 residues long: Pantothenate synthetase (287 aa).

Position 30-37 (30-37 (MGNLHSGH)) interacts with ATP. Catalysis depends on His37, which acts as the Proton donor. Gln61 is a binding site for (R)-pantoate. Gln61 is a binding site for beta-alanine. Residue 149-152 (GEKD) participates in ATP binding. Gln155 is a (R)-pantoate binding site. ATP contacts are provided by residues Val178 and 186–189 (LSSR).

The protein belongs to the pantothenate synthetase family. In terms of assembly, homodimer.

It is found in the cytoplasm. It carries out the reaction (R)-pantoate + beta-alanine + ATP = (R)-pantothenate + AMP + diphosphate + H(+). It participates in cofactor biosynthesis; (R)-pantothenate biosynthesis; (R)-pantothenate from (R)-pantoate and beta-alanine: step 1/1. In terms of biological role, catalyzes the condensation of pantoate with beta-alanine in an ATP-dependent reaction via a pantoyl-adenylate intermediate. This is Pantothenate synthetase from Pseudomonas putida (strain ATCC 47054 / DSM 6125 / CFBP 8728 / NCIMB 11950 / KT2440).